A 618-amino-acid chain; its full sequence is 1-deoxy-D-xylulose-5-phosphate synthase (618 aa).

Thiamine diphosphate contacts are provided by residues His70 and 111–113 (GHS). A Mg(2+)-binding site is contributed by Asp142. Thiamine diphosphate contacts are provided by residues 143 to 144 (GS), Asn171, Tyr278, and Glu360. Asn171 is a Mg(2+) binding site.

The protein belongs to the transketolase family. DXPS subfamily. As to quaternary structure, homodimer. The cofactor is Mg(2+). Thiamine diphosphate serves as cofactor.

It carries out the reaction D-glyceraldehyde 3-phosphate + pyruvate + H(+) = 1-deoxy-D-xylulose 5-phosphate + CO2. Its pathway is metabolic intermediate biosynthesis; 1-deoxy-D-xylulose 5-phosphate biosynthesis; 1-deoxy-D-xylulose 5-phosphate from D-glyceraldehyde 3-phosphate and pyruvate: step 1/1. Functionally, catalyzes the acyloin condensation reaction between C atoms 2 and 3 of pyruvate and glyceraldehyde 3-phosphate to yield 1-deoxy-D-xylulose-5-phosphate (DXP). This is 1-deoxy-D-xylulose-5-phosphate synthase from Helicobacter pylori (strain ATCC 700392 / 26695) (Campylobacter pylori).